A 749-amino-acid polypeptide reads, in one-letter code: Serine/threonine-protein phosphatase 4 regulatory subunit 3 (749 aa).

Regulatory subunit 3 (R3) of the histone H2A phosphatase complex (HTP-C) consisting of PPH3, PSY2 and PSY4.

It localises to the nucleus. Its function is as follows. Core regulatory subunit of the histone H2A phosphatase complex, which dephosphorylates H2AS128ph (gamma-H2A) that has been displaced from sites of DNA lesions in the double-stranded DNA break repair process. Dephosphorylation is necessary for efficient recovery from the DNA damage checkpoint. This is Serine/threonine-protein phosphatase 4 regulatory subunit 3 (PSY2) from Kluyveromyces lactis (strain ATCC 8585 / CBS 2359 / DSM 70799 / NBRC 1267 / NRRL Y-1140 / WM37) (Yeast).